Consider the following 458-residue polypeptide: Probable plasmid replicative DNA helicase (458 aa).

Residues 194–458 form the SF4 helicase domain; sequence KIDYVDGLPT…GKFTIQKEAW (265 aa). Residue 225–232 coordinates ATP; it reads ARPAMGKT.

This sequence belongs to the helicase family. DnaB subfamily. As to quaternary structure, homohexamer.

The catalysed reaction is Couples ATP hydrolysis with the unwinding of duplex DNA at the replication fork by translocating in the 5'-3' direction. This creates two antiparallel DNA single strands (ssDNA). The leading ssDNA polymer is the template for DNA polymerase III holoenzyme which synthesizes a continuous strand.. It carries out the reaction ATP + H2O = ADP + phosphate + H(+). A replicative DNA helicase, it participates in initiation and elongation during DNA replication. Travels ahead of the DNA replisome, separating dsDNA into templates for DNA synthesis. A processive ATP-dependent 5'-3' DNA helicase it has DNA-dependent ATPase activity. The polypeptide is Probable plasmid replicative DNA helicase (Chlamydia psittaci (Chlamydophila psittaci)).